Reading from the N-terminus, the 187-residue chain is Calcium and integrin-binding family member 3 (187 aa).

EF-hand domains are found at residues 66–101, 103–138, and 144–179; these read KDNP…MSEM, PRDL…LTRG, and EVSL…APDF. Residues D116, N118, D120, Y122, D127, D157, D159, D161, R163, and D168 each coordinate Ca(2+).

In terms of assembly, monomer and homodimer. Interacts with ITGA2B (via C-terminus cytoplasmic tail region); the interaction is stabilized/increased in a calcium and magnesium-dependent manner. Interacts with TMC1.

In terms of biological role, acts a an auxiliary subunit of the sensory mechanoelectrical transduction (MET) channel in hair cells. Plays a role in regulating hair cell MET channel localization and function. The polypeptide is Calcium and integrin-binding family member 3 (CIB3) (Homo sapiens (Human)).